The sequence spans 305 residues: Translation initiation factor eIF2B subunit alpha (305 aa).

Position 35 is an N6-acetyllysine (K35).

It belongs to the eIF-2B alpha/beta/delta subunits family. In terms of assembly, component of the translation initiation factor 2B (eIF2B) complex which is a heterodecamer of two sets of five different subunits: alpha, beta, gamma, delta and epsilon. Subunits alpha, beta and delta comprise a regulatory subcomplex and subunits epsilon and gamma comprise a catalytic subcomplex. Within the complex, the hexameric regulatory complex resides at the center, with the two heterodimeric catalytic subcomplexes bound on opposite sides.

The protein resides in the cytoplasm. Its subcellular location is the cytosol. Activated by the chemical integrated stress response (ISR) inhibitor ISRIB which stimulates guanine nucleotide exchange factor activity for both phosphorylated and unphosphorylated eIF2. Its function is as follows. Acts as a component of the translation initiation factor 2B (eIF2B) complex, which catalyzes the exchange of GDP for GTP on eukaryotic initiation factor 2 (eIF2) gamma subunit. Its guanine nucleotide exchange factor activity is repressed when bound to eIF2 complex phosphorylated on the alpha subunit, thereby limiting the amount of methionyl-initiator methionine tRNA available to the ribosome and consequently global translation is repressed. The sequence is that of Translation initiation factor eIF2B subunit alpha (Eif2b1) from Rattus norvegicus (Rat).